The following is a 97-amino-acid chain: uncharacterized protein (97 aa).

It to M.thermoautotrophicum MTH1236.

This is an uncharacterized protein from Methanocaldococcus jannaschii (strain ATCC 43067 / DSM 2661 / JAL-1 / JCM 10045 / NBRC 100440) (Methanococcus jannaschii).